Here is a 405-residue protein sequence, read N- to C-terminus: uncharacterized protein (405 aa).

Belongs to the UDP-glycosyltransferase family.

This is an uncharacterized protein from Bacillus subtilis (strain 168).